Consider the following 524-residue polypeptide: Secologanin synthase 1 (524 aa).

At 1–11 the chain is on the lumenal side; that stretch reads MEMDMDTIRKA. A helical membrane pass occupies residues 12–32; it reads IAATIFALVMAWAWRVLDWAW. At 33-524 the chain is on the cytoplasmic side; it reads FTPKRIEKRL…SHVIYKKLES (492 aa). Residue Cys470 participates in heme binding.

Belongs to the cytochrome P450 family. The cofactor is heme. Upper and lower leaf epidermis.

The protein resides in the endoplasmic reticulum membrane. It carries out the reaction loganin + reduced [NADPH--hemoprotein reductase] + O2 = secologanin + oxidized [NADPH--hemoprotein reductase] + 2 H2O + H(+). It catalyses the reaction secologanin + reduced [NADPH--hemoprotein reductase] + O2 = secoxyloganin + oxidized [NADPH--hemoprotein reductase] + H2O + 2 H(+). It functions in the pathway alkaloid biosynthesis; secologanin biosynthesis. Functionally, component of the seco-iridoid and derivatives monoterpenoid indole alkaloids (MIAs, e.g. secologanin) biosynthesis pathway. Catalyzes the conversion of loganin into secologanin. Catalyzes the conversion of secologanin into secoxyloganin. The polypeptide is Secologanin synthase 1 (Catharanthus roseus (Madagascar periwinkle)).